Consider the following 60-residue polypeptide: Large ribosomal subunit protein uL30 (60 aa).

It belongs to the universal ribosomal protein uL30 family. In terms of assembly, part of the 50S ribosomal subunit.

This chain is Large ribosomal subunit protein uL30, found in Bacillus pumilus (strain SAFR-032).